A 235-amino-acid chain; its full sequence is Glycerol-3-phosphate acyltransferase (235 aa).

The next 6 membrane-spanning stretches (helical) occupy residues 4 to 24, 56 to 76, 94 to 114, 125 to 145, 152 to 172, and 191 to 211; these read LLAILAVSYIIGSIPTSIMAG, SVTLIDIAKGVIAAVSVVAFF, LLAGMAAVIGHVFTVFAGFKG, LIGIAPVSMLIVIGIFLLTVW, VASILAAIAFPLIIAIRKYVF, and FHDSLDYHLMIFGLIVALAIL.

Belongs to the PlsY family. As to quaternary structure, probably interacts with PlsX.

The protein resides in the cell inner membrane. The catalysed reaction is an acyl phosphate + sn-glycerol 3-phosphate = a 1-acyl-sn-glycero-3-phosphate + phosphate. The protein operates within lipid metabolism; phospholipid metabolism. Catalyzes the transfer of an acyl group from acyl-phosphate (acyl-PO(4)) to glycerol-3-phosphate (G3P) to form lysophosphatidic acid (LPA). This enzyme utilizes acyl-phosphate as fatty acyl donor, but not acyl-CoA or acyl-ACP. This Chlorobium luteolum (strain DSM 273 / BCRC 81028 / 2530) (Pelodictyon luteolum) protein is Glycerol-3-phosphate acyltransferase.